Consider the following 389-residue polypeptide: Mitochondrial carrier homolog 1 (389 aa).

The segment at 1-78 (MGASDPEVAP…PGAPGSGDNA (78 aa)) is disordered. Topologically, residues 1–93 (MGASDPEVAP…LFVALGAGVT (93 aa)) are mitochondrial intermembrane. A compositionally biased stretch (gly residues) spans 15-33 (GAAGMAGAGAGAGARGGAP). Residue R29 is modified to Omega-N-methylarginine. Solcar repeat units follow at residues 81–176 (TEAL…FPPD) and 192–280 (KKVV…INAY). The chain crosses the membrane as a helical span at residues 94–104 (ALSHPLLYVKL). Residues 105-155 (LIQVGHEPMPPTLGTNVLGRKVLYLPSFFTYAKYIVQVDGKIGLFRGLSPR) lie on the Cytoplasmic side of the membrane. The chain crosses the membrane as a helical span at residues 156–176 (LMSNALSTVTRGSMKKVFPPD). At 177–209 (EMEQVSNKDDMKTSLKKVVKETSYEMMMQCVSR) the chain is on the mitochondrial intermembrane side. The helical transmembrane segment at 210 to 229 (MLAHPLHVISMRCMVQFVGR) threads the bilayer. At 230-254 (EAKYSGVLSSIGKIFKEEGLLGFFV) the chain is on the cytoplasmic side. Residues 255 to 279 (GLIPHLLGDVVFLWGCNLLAHFINA) traverse the membrane as a helical segment. The Mitochondrial intermembrane portion of the chain corresponds to 280 to 322 (YLVDDSVSDTPGGLGNDQNPGSQFSQALAIRSYTKFVMGIAVS). The helical transmembrane segment at 323 to 342 (MLTYPFLLVGDLMAVNNCGL) threads the bilayer. At 343–371 (RAGLPPYSPVFKSWIHCWKYLSVQGQLFR) the chain is on the cytoplasmic side. The helical transmembrane segment at 372–389 (GSSLLFRRVSSGSCFALE) threads the bilayer.

Belongs to the mitochondrial carrier (TC 2.A.29) family. Interacts with PSEN1.

The protein resides in the mitochondrion outer membrane. Its function is as follows. Protein insertase that mediates insertion of transmembrane proteins into the mitochondrial outer membrane. Catalyzes insertion of proteins with alpha-helical transmembrane regions, such as signal-anchored, tail-anchored and multi-pass membrane proteins. Does not mediate insertion of beta-barrel transmembrane proteins. May play a role in apoptosis. The chain is Mitochondrial carrier homolog 1 (Mtch1) from Mus musculus (Mouse).